The chain runs to 366 residues: Peptide chain release factor 2 (366 aa).

Gln-246 carries the N5-methylglutamine modification.

It belongs to the prokaryotic/mitochondrial release factor family. In terms of processing, methylated by PrmC. Methylation increases the termination efficiency of RF2.

It localises to the cytoplasm. Its function is as follows. Peptide chain release factor 2 directs the termination of translation in response to the peptide chain termination codons UGA and UAA. This chain is Peptide chain release factor 2, found in Frankia casuarinae (strain DSM 45818 / CECT 9043 / HFP020203 / CcI3).